The sequence spans 332 residues: 2,3-diketo-L-gulonate reductase (332 aa).

The active-site Proton donor is His44. Residues Ile168–Ser174, Trp224–Lys225, and Gly304–Glu306 contribute to the NAD(+) site.

The protein belongs to the LDH2/MDH2 oxidoreductase family. DlgD subfamily. Homodimer.

The protein localises to the cytoplasm. It carries out the reaction 3-dehydro-L-gulonate + NAD(+) = 2,3-dioxo-L-gulonate + NADH + H(+). The enzyme catalyses 3-dehydro-L-gulonate + NADP(+) = 2,3-dioxo-L-gulonate + NADPH + H(+). In terms of biological role, catalyzes the reduction of 2,3-diketo-L-gulonate in the presence of NADH, to form 3-keto-L-gulonate. This is 2,3-diketo-L-gulonate reductase from Escherichia coli O6:K15:H31 (strain 536 / UPEC).